The chain runs to 250 residues: Triosephosphate isomerase (250 aa).

9–11 (NWK) lines the substrate pocket. The active-site Electrophile is His96. Catalysis depends on Glu168, which acts as the Proton acceptor. Residues Gly174, Ser216, and 237-238 (GG) contribute to the substrate site.

This sequence belongs to the triosephosphate isomerase family. In terms of assembly, homodimer.

It is found in the cytoplasm. The catalysed reaction is D-glyceraldehyde 3-phosphate = dihydroxyacetone phosphate. Its pathway is carbohydrate biosynthesis; gluconeogenesis. The protein operates within carbohydrate degradation; glycolysis; D-glyceraldehyde 3-phosphate from glycerone phosphate: step 1/1. Functionally, involved in the gluconeogenesis. Catalyzes stereospecifically the conversion of dihydroxyacetone phosphate (DHAP) to D-glyceraldehyde-3-phosphate (G3P). This chain is Triosephosphate isomerase, found in Leptospira interrogans serogroup Icterohaemorrhagiae serovar copenhageni (strain Fiocruz L1-130).